Consider the following 270-residue polypeptide: Putative phosphoenolpyruvate synthase regulatory protein (270 aa).

150 to 157 contributes to the ADP binding site; it reads GVSRCGKT.

This sequence belongs to the pyruvate, phosphate/water dikinase regulatory protein family. PSRP subfamily.

The catalysed reaction is [pyruvate, water dikinase] + ADP = [pyruvate, water dikinase]-phosphate + AMP + H(+). It catalyses the reaction [pyruvate, water dikinase]-phosphate + phosphate + H(+) = [pyruvate, water dikinase] + diphosphate. Functionally, bifunctional serine/threonine kinase and phosphorylase involved in the regulation of the phosphoenolpyruvate synthase (PEPS) by catalyzing its phosphorylation/dephosphorylation. The protein is Putative phosphoenolpyruvate synthase regulatory protein of Shewanella sp. (strain ANA-3).